The primary structure comprises 415 residues: Packaging protein 3 (415 aa).

Disordered stretches follow at residues methionine 1–alanine 56 and glutamate 66–lysine 85. Residues methionine 1–serine 173 form an interaction with packaging protein 1 region. Residues proline 31–aspartate 46 are compositionally biased toward low complexity. Residue serine 75 is modified to Phosphoserine; by host. The span at proline 76 to lysine 85 shows a compositional bias: basic and acidic residues. Serine 360 is subject to Phosphoserine; by host. A compositionally biased stretch (low complexity) spans glycine 381 to glycine 394. Residues glycine 381–tyrosine 415 form a disordered region. Residues glutamate 400–tyrosine 415 are compositionally biased toward acidic residues.

The protein belongs to the adenoviridae packaging protein 3 family. In terms of assembly, part of the genome packaging complex composed of packaging proteins 1, 2 and 3; this complex specifically binds to the packaging sequence on the left end of viral genomic DNA and performs packaging of the viral genome. Interacts with hexon-linking protein IIIa; this interaction is required to promote correct genome packaging. Cleaved at different sites by the viral protease during virion maturation.

The protein localises to the host nucleus. Involved in viral genome packaging through its interaction with packaging proteins 1 and 2. After proteolytic cleavage by adenovirus protease, L1 52/55k protein is removed from the capsid during viral maturation. In Human adenovirus C serotype 2 (HAdV-2), this protein is Packaging protein 3.